The sequence spans 292 residues: 11-beta-hydroxysteroid dehydrogenase 1 (292 aa).

Residues 2 to 7 (HFMKKY) are Cytoplasmic-facing. A helical; Signal-anchor for type II membrane protein transmembrane segment spans residues 8–24 (LLPILVLFLAYYYYSTK). Topologically, residues 25 to 292 (EEFRPEMLQG…SFTFDKLISS (268 aa)) are lumenal. NADP(+) contacts are provided by residues 41–67 (GASKGIGREMAYHLSEMGAHVVLTARS), 92–93 (TM), and 119–121 (NHI). N-linked (GlcNAc...) asparagine glycosylation is present at Asn-162. Residue Ser-170 coordinates substrate. The Proton acceptor role is filled by Tyr-183. 183–187 (YSASK) serves as a coordination point for NADP(+). Residue Asn-207 is glycosylated (N-linked (GlcNAc...) asparagine). NADP(+) is bound at residue 218-222 (INTET).

The protein belongs to the short-chain dehydrogenases/reductases (SDR) family. As to quaternary structure, homodimer. As to expression, detected in adrenal gland, liver, kidney, testis, and at lower levels in brain and lung (at protein level).

It localises to the endoplasmic reticulum membrane. The enzyme catalyses an 11beta-hydroxysteroid + NADP(+) = an 11-oxosteroid + NADPH + H(+). It catalyses the reaction corticosterone + NADP(+) = 11-dehydrocorticosterone + NADPH + H(+). It carries out the reaction a 7beta-hydroxysteroid + NADP(+) = a 7-oxosteroid + NADPH + H(+). The catalysed reaction is 7-oxocholesterol + NADPH + H(+) = 7beta-hydroxycholesterol + NADP(+). The enzyme catalyses 7-oxocholesterol + NADPH + H(+) = 7alpha-hydroxycholesterol + NADP(+). It catalyses the reaction chenodeoxycholate + NADP(+) = 7-oxolithocholate + NADPH + H(+). It carries out the reaction 7-oxolithocholate + NADPH + H(+) = ursodeoxycholate + NADP(+). The catalysed reaction is glycochenodeoxycholate + NADP(+) = 7-oxoglycolithocholate + NADPH + H(+). The enzyme catalyses taurochenodeoxycholate + NADP(+) = 7-oxotaurolithocholate + NADPH + H(+). It catalyses the reaction tauroursodeoxycholate + NADP(+) = 7-oxotaurolithocholate + NADPH + H(+). It carries out the reaction glycoursodeoxycholate + NADP(+) = 7-oxoglycolithocholate + NADPH + H(+). The catalysed reaction is 7-oxopregnenolone + NADPH + H(+) = 7beta-hydroxypregnenolone + NADP(+). The enzyme catalyses 3beta,7alpha-dihydroxyandrost-5-en-17-one + NADP(+) = 3beta-hydroxy-5-androstene-7,17-dione + NADPH + H(+). It catalyses the reaction 3beta-hydroxy-5-androstene-7,17-dione + NADPH + H(+) = 3beta,7beta-dihydroxyandrost-5-en-17-one + NADP(+). It carries out the reaction 3beta-hydroxy-5alpha-androstane-7,17-dione + NADPH + H(+) = 3beta,7beta-dihydroxy-5alpha-androstan-17-one + NADP(+). Its pathway is steroid metabolism. In terms of biological role, controls the reversible conversion of biologically active glucocorticoids such as 11-dehydrocorticosterone to corticosterone in the presence of NADP(H). Participates in the corticosteroid receptor-mediated anti-inflammatory response, as well as metabolic and homeostatic processes. Bidirectional in vitro, predominantly functions as a reductase in vivo, thereby increasing the concentration of active glucocorticoids. It has broad substrate specificity, besides glucocorticoids, it accepts other steroid and sterol substrates. Interconverts 7-oxo- and 7-hydroxy-neurosteroids such as 7-oxopregnenolone and 7beta-hydroxypregnenolone, 7-oxodehydroepiandrosterone (3beta-hydroxy-5-androstene-7,17-dione) and 7beta-hydroxydehydroepiandrosterone (3beta,7beta-dihydroxyandrost-5-en-17-one), among others. Catalyzes reversibly the conversion of the major dietary oxysterol, 7-ketocholesterol (7-oxocholesterol), into the more polar 7-beta-hydroxycholesterol and 7-alpha-hhydroxycholesterol metabolites. 7-oxocholesterol is one of the most important oxysterols, it participates in several events such as induction of apoptosis, accumulation in atherosclerotic lesions, lipid peroxidation, and induction of foam cell formation. Mediates the 7-oxo reduction of 7-oxolithocholate mainly to chenodeoxycholate, and to a lesser extent to ursodeoxycholate, both in its free form and when conjugated to glycine or taurine, providing a link between glucocorticoid activation and bile acid metabolism. Catalyzes the synthesis of 7-beta-25-dihydroxycholesterol from 7-oxo-25-hydroxycholesterol in vitro, which acts as a ligand for the G-protein-coupled receptor (GPCR) Epstein-Barr virus-induced gene 2 (EBI2) and may thereby regulate immune cell migration. This Mesocricetus auratus (Golden hamster) protein is 11-beta-hydroxysteroid dehydrogenase 1 (HSD11B1).